The following is an 85-amino-acid chain: Small ribosomal subunit protein bS16 (85 aa).

This sequence belongs to the bacterial ribosomal protein bS16 family.

This is Small ribosomal subunit protein bS16 from Xanthomonas oryzae pv. oryzae (strain PXO99A).